The primary structure comprises 120 residues: Cell division protein FtsL (120 aa).

Residues 1 to 22 form a disordered region; it reads MSNVAYKSNLEPNRVHREAEQP. Over 1 to 37 the chain is Cytoplasmic; the sequence is MSNVAYKSNLEPNRVHREAEQPKKQILKRGQMTLGEK. The span at 13–22 shows a compositional bias: basic and acidic residues; it reads NRVHREAEQP. The helical transmembrane segment at 38–58 threads the bilayer; that stretch reads VIITIALAIVLVVAFRIISVQ. Residues 59 to 120 lie on the Extracellular side of the membrane; that stretch reads AQIYTVNQEI…GDNVKVVDGQ (62 aa).

This sequence belongs to the FtsL family.

Its subcellular location is the cell membrane. Functionally, essential cell division protein. This is Cell division protein FtsL from Listeria monocytogenes serovar 1/2a (strain ATCC BAA-679 / EGD-e).